A 433-amino-acid polypeptide reads, in one-letter code: 26S proteasome regulatory subunit 7 (433 aa).

The tract at residues 1 to 23 (MPDYLGADQRKTKEEEKEDKPIR) is disordered. Over residues 8–23 (DQRKTKEEEKEDKPIR) the composition is skewed to basic and acidic residues. Residue 216-223 (GPPGTGKT) coordinates ATP.

The protein belongs to the AAA ATPase family. Post-translationally, phosphorylated. Dephosphorylated by ublcp1 which impairs psmc2 ATPase activity and disrupts 26S proteasome assembly.

The protein localises to the cytoplasm. Its subcellular location is the nucleus. Functionally, the 26S proteasome is involved in the ATP-dependent degradation of ubiquitinated proteins. The regulatory (or ATPase) complex confers ATP dependency and substrate specificity to the 26S complex. The sequence is that of 26S proteasome regulatory subunit 7 (psmc2) from Xenopus laevis (African clawed frog).